The sequence spans 493 residues: 3-octaprenyl-4-hydroxybenzoate carboxy-lyase (493 aa).

Asn-172 contributes to the Mn(2+) binding site. Prenylated FMN is bound by residues 175–177, 189–191, and 194–195; these read IYR, RWL, and RG. Glu-238 lines the Mn(2+) pocket. Asp-287 serves as the catalytic Proton donor.

The protein belongs to the UbiD family. As to quaternary structure, homohexamer. The cofactor is prenylated FMN. It depends on Mn(2+) as a cofactor.

It is found in the cell membrane. The enzyme catalyses a 4-hydroxy-3-(all-trans-polyprenyl)benzoate + H(+) = a 2-(all-trans-polyprenyl)phenol + CO2. It participates in cofactor biosynthesis; ubiquinone biosynthesis. Functionally, catalyzes the decarboxylation of 3-octaprenyl-4-hydroxy benzoate to 2-octaprenylphenol, an intermediate step in ubiquinone biosynthesis. The sequence is that of 3-octaprenyl-4-hydroxybenzoate carboxy-lyase from Shewanella piezotolerans (strain WP3 / JCM 13877).